Consider the following 79-residue polypeptide: MSQEILEKVCSIVSEQLSVEAGEVKSDSNFQNDLGADSLDTVELVMALEEAFDIEIPDEAAEGIATVGDAVKFIEEKKG.

The 76-residue stretch at 3-78 (QEILEKVCSI…DAVKFIEEKK (76 aa)) folds into the Carrier domain. The residue at position 38 (Ser-38) is an O-(pantetheine 4'-phosphoryl)serine.

The protein belongs to the acyl carrier protein (ACP) family. In terms of processing, 4'-phosphopantetheine is transferred from CoA to a specific serine of apo-ACP by AcpS. This modification is essential for activity because fatty acids are bound in thioester linkage to the sulfhydryl of the prosthetic group.

Its subcellular location is the cytoplasm. It participates in lipid metabolism; fatty acid biosynthesis. Carrier of the growing fatty acid chain in fatty acid biosynthesis. The polypeptide is Acyl carrier protein (Prochlorococcus marinus (strain MIT 9301)).